A 778-amino-acid chain; its full sequence is Preasperterpenoid A synthase PvPS (778 aa).

Residues 1 to 414 are terpene cyclase; that stretch reads MAATKKSTAT…HRYNFHKPAA (414 aa). Aspartate 176 and aspartate 180 together coordinate Mg(2+). Aspartate 176 lines the substrate pocket. The short motif at 176–180 is the DDXXD 1 element; it reads DDILD. Substrate-binding positions include 266–269, asparagine 310, 314–318, and 406–407; these read RVIN, SWEKE, and RY. Residues 310 to 318 carry the NSE/DTE motif; the sequence is NDYFSWEKE. Residues 414–431 show a composition bias toward basic and acidic residues; the sequence is AKENEDTDDEGAKSDDSK. Positions 415 to 778 are prenyltransferase; the sequence is KENEDTDDEG…LRLLLKRLQV (364 aa). The segment at 416–454 is disordered; the sequence is ENEDTDDEGAKSDDSKTTLNDSTDSTVVDVKTPATSGLL. Isopentenyl diphosphate-binding residues include lysine 499, arginine 502, and histidine 531. Mg(2+) is bound by residues aspartate 538 and aspartate 542. Residues 538-542 carry the DDXXD 2 motif; that stretch reads DDIED. Arginine 547 is a binding site for dimethylallyl diphosphate. Isopentenyl diphosphate is bound at residue arginine 548. Dimethylallyl diphosphate contacts are provided by lysine 625, threonine 626, glutamine 662, asparagine 669, lysine 679, and lysine 689.

It in the N-terminal section; belongs to the terpene synthase family. In the C-terminal section; belongs to the FPP/GGPP synthase family. As to quaternary structure, hexamer. Mg(2+) is required as a cofactor.

It carries out the reaction isopentenyl diphosphate + (2E,6E)-farnesyl diphosphate = (2E,6E,10E)-geranylgeranyl diphosphate + diphosphate. The catalysed reaction is isopentenyl diphosphate + (2E,6E,10E)-geranylgeranyl diphosphate = (2E,6E,10E,14E)-geranylfarnesyl diphosphate + diphosphate. It catalyses the reaction (2E,6E,10E,14E)-geranylfarnesyl diphosphate = preasperterpenoid A + diphosphate. Its pathway is secondary metabolite biosynthesis; terpenoid biosynthesis. Its function is as follows. Bifunctional sesterterpene synthase that possesses both prenyl transferase and terpene cyclase activity, converting isopentenyl diphosphate and dimethylallyl diphosphate into geranylfarnesyl diphosphate (GFPP) and further converting GFPP into preasperterpenoid A. This chain is Preasperterpenoid A synthase PvPS, found in Talaromyces verruculosus (Penicillium verruculosum).